Consider the following 329-residue polypeptide: G-protein coupled bile acid receptor 1 (329 aa).

Over 1 to 15 (MMTPNSTELSAIPMG) the chain is Extracellular. Residue N5 is glycosylated (N-linked (GlcNAc...) asparagine). The helical transmembrane segment at 16–36 (VLGLSLALASLIVIANLLLAL) threads the bilayer. Over 37–49 (GIALDRHLRSPPA) the chain is Cytoplasmic. Residues 50–70 (GCFFLSLLLAGLLTGLALPML) form a helical membrane-spanning segment. The Extracellular segment spans residues 71–84 (PGLWSRNHQGYWSC). An intrachain disulfide couples C84 to C154. The helical transmembrane segment at 85–105 (LLLHLTPNFCFLSLLANLLLV) threads the bilayer. The Cytoplasmic portion of the chain corresponds to 106-124 (HGERYMAVLQPLRPHGSVR). A helical transmembrane segment spans residues 125–145 (LALFLTWVSSLFFASLPALGW). Topologically, residues 146–164 (NHWSPDANCSSQAVFPAPY) are extracellular. N153 carries an N-linked (GlcNAc...) asparagine glycan. The chain crosses the membrane as a helical span at residues 165 to 185 (LYLEVYGLLLPAVGATALLSV). Over 186-229 (RVLATAHRQLCEIRRLERAVCRDVPSTLARALTWRQARAQAGAT) the chain is Cytoplasmic. The chain crosses the membrane as a helical span at residues 230–250 (LLFLLCWGPYVATLLLSVLAY). Topologically, residues 251-260 (ERRPPLGPGT) are extracellular. Residues 261-281 (LLSLISLGSTSAAAVPVAMGL) traverse the membrane as a helical segment. The Cytoplasmic portion of the chain corresponds to 282-329 (GDQRYTAPWRTAAQRCLRVLRGRAKRDNPGPSTAYHTSSQCSIDLDLN).

Belongs to the G-protein coupled receptor 1 family.

Its subcellular location is the cell membrane. Functionally, receptor for bile acid. Bile acid-binding induces its internalization, activation of extracellular signal-regulated kinase and intracellular cAMP production. May be involved in the suppression of macrophage functions by bile acids. Involved in bile acid promoted GLP1R secretion. The polypeptide is G-protein coupled bile acid receptor 1 (Gpbar1) (Mus musculus (Mouse)).